A 409-amino-acid chain; its full sequence is Peptidase T (409 aa).

Histidine 78 contributes to the Zn(2+) binding site. Aspartate 80 is an active-site residue. Position 140 (aspartate 140) interacts with Zn(2+). Glutamate 174 (proton acceptor) is an active-site residue. Positions 175, 197, and 379 each coordinate Zn(2+).

It belongs to the peptidase M20B family. The cofactor is Zn(2+).

Its subcellular location is the cytoplasm. It catalyses the reaction Release of the N-terminal residue from a tripeptide.. In terms of biological role, cleaves the N-terminal amino acid of tripeptides. This Photobacterium profundum (strain SS9) protein is Peptidase T.